Here is a 224-residue protein sequence, read N- to C-terminus: Deoxyribose-phosphate aldolase (224 aa).

Residue Asp92 is the Proton donor/acceptor of the active site. Residue Lys154 is the Schiff-base intermediate with acetaldehyde of the active site. Lys183 serves as the catalytic Proton donor/acceptor.

This sequence belongs to the DeoC/FbaB aldolase family. DeoC type 1 subfamily.

It localises to the cytoplasm. The enzyme catalyses 2-deoxy-D-ribose 5-phosphate = D-glyceraldehyde 3-phosphate + acetaldehyde. It functions in the pathway carbohydrate degradation; 2-deoxy-D-ribose 1-phosphate degradation; D-glyceraldehyde 3-phosphate and acetaldehyde from 2-deoxy-alpha-D-ribose 1-phosphate: step 2/2. Catalyzes a reversible aldol reaction between acetaldehyde and D-glyceraldehyde 3-phosphate to generate 2-deoxy-D-ribose 5-phosphate. This Histophilus somni (strain 129Pt) (Haemophilus somnus) protein is Deoxyribose-phosphate aldolase.